The sequence spans 92 residues: UPF0223 protein SZO_10560 (92 aa).

Belongs to the UPF0223 family.

This is UPF0223 protein SZO_10560 from Streptococcus equi subsp. zooepidemicus (strain H70).